The sequence spans 147 residues: Mineralocorticoid receptor (147 aa).

Residues 1–147 (FALSWRSYKH…SQALKVEFPA (147 aa)) enclose the NR LBD domain. Residues arginine 6 and threonine 134 each coordinate 21-hydroxyprogesterone. Aldosterone contacts are provided by arginine 6 and threonine 134. Residues arginine 6 and threonine 134 each coordinate progesterone.

This sequence belongs to the nuclear hormone receptor family. NR3 subfamily.

It is found in the cytoplasm. It localises to the nucleus. Functionally, receptor for both mineralocorticoids (MC) such as aldosterone and glucocorticoids (GC) such as corticosterone or cortisol. Binds to mineralocorticoid response elements (MRE) and transactivates target genes. The effect of MC is to increase ion and water transport and thus raise extracellular fluid volume and blood pressure and lower potassium levels. The protein is Mineralocorticoid receptor (NR3C2) of Gallus gallus (Chicken).